Consider the following 290-residue polypeptide: Zinc finger AN1 and C2H2 domain-containing stress-associated protein 16 (290 aa).

2 consecutive AN1-type zinc fingers follow at residues 7 to 55 and 95 to 145; these read PNLG…QKDV and VTKK…KPES. 16 residues coordinate Zn(2+): Cys13, Cys18, Cys28, Cys31, Cys36, His39, His45, Cys47, Cys101, Cys106, Cys118, Cys121, Cys126, His129, His135, and Cys137. C2H2-type zinc fingers lie at residues 224–247 and 261–284; these read EQCV…EKSH and DVCP…ERDH.

In terms of biological role, may be involved in environmental stress response. This Oryza sativa subsp. japonica (Rice) protein is Zinc finger AN1 and C2H2 domain-containing stress-associated protein 16 (SAP16).